The primary structure comprises 495 residues: uncharacterized protein (495 aa).

The 59-residue stretch at 16–74 folds into the TRAM domain; that stretch reads SSKRGDLIELAVTALDEDGNGIGTHDGTNVHVIGALPDERVRARLTHVGKRHLHAEAVE. [4Fe-4S] cluster-binding residues include Cys88, Cys94, Cys97, and Cys175. S-adenosyl-L-methionine contacts are provided by Gln299, Tyr328, Glu349, and Asn397. Cys424 (nucleophile) is an active-site residue. Over residues 472-483 the composition is skewed to basic and acidic residues; the sequence is DRLESPAKERSR. Residues 472-495 are disordered; sequence DRLESPAKERSRPRASHKAKGGAV. Positions 484 to 495 are enriched in basic residues; the sequence is PRASHKAKGGAV.

The protein belongs to the class I-like SAM-binding methyltransferase superfamily. RNA M5U methyltransferase family.

This is an uncharacterized protein from Geobacter sulfurreducens (strain ATCC 51573 / DSM 12127 / PCA).